A 185-amino-acid chain; its full sequence is Transcriptional repressor NrdR (185 aa).

The interval 1–24 (MRCPFCGGPDTQVKDSRPSEDSSA) is disordered. Residues 3–34 (CPFCGGPDTQVKDSRPSEDSSAIRRRRVCPDC) fold into a zinc finger. A compositionally biased stretch (basic and acidic residues) spans 12 to 24 (QVKDSRPSEDSSA). In terms of domain architecture, ATP-cone spans 49–139 (LVVLKRSGKR…VYKNFREAQD (91 aa)). A disordered region spans residues 149–185 (ERLEGEGDLPEDGEAAPAPPDEVVAAPRRGRPARKRA). Residues 176–185 (RRGRPARKRA) show a composition bias toward basic residues.

This sequence belongs to the NrdR family. The cofactor is Zn(2+).

Functionally, negatively regulates transcription of bacterial ribonucleotide reductase nrd genes and operons by binding to NrdR-boxes. The chain is Transcriptional repressor NrdR from Methylorubrum extorquens (strain PA1) (Methylobacterium extorquens).